We begin with the raw amino-acid sequence, 93 residues long: UPF0358 protein lmo1070 (93 aa).

The protein belongs to the UPF0358 family.

This Listeria monocytogenes serovar 1/2a (strain ATCC BAA-679 / EGD-e) protein is UPF0358 protein lmo1070.